A 527-amino-acid chain; its full sequence is Abrin-b (527 aa).

Pyrrolidone carboxylic acid is present on Gln-1. An N-linked (GlcNAc...) asparagine glycan is attached at Asn-110. Residue Glu-163 is part of the active site. 3 disulfides stabilise this stretch: Cys-246–Cys-268, Cys-285–Cys-304, and Cys-328–Cys-345. The 128-residue stretch at 272–399 folds into the Ricin B-type lectin 1 domain; it reads YEPTVRIGGR…YLMRQGWRTG (128 aa). Residues 282 to 324 form a 1-alpha repeat; the sequence is NGMCVDVYDDGYHNGNRIIAWKCKDRLEENQLWTLKSDKTIRS. Residues 325 to 365 form a 1-beta repeat; that stretch reads NGKCLTTEGYAPGNYVMIYDCTSAVAEATYWEIWDNGTIIN. 2 N-linked (GlcNAc...) asparagine glycosylation sites follow: Asn-360 and Asn-400. The stretch at 368-400 is one 1-gamma repeat; sequence SALVLSAESSSMGGTLTVQTNEYLMRQGWRTGN. Positions 402-526 constitute a Ricin B-type lectin 2 domain; sequence TSPFVTSISG…GKPNQIWLTL (125 aa). One copy of the 2-alpha repeat lies at 413-448; the sequence is SDLCMQAQGSNVWLAYCDNNKKEQQWALYTDGSIRS. Cystine bridges form between Cys-416/Cys-429 and Cys-455/Cys-472. A 2-beta repeat occupies 452–491; that stretch reads TNNCLTSKDHKQGSPIVLMACSNGWASQRWLFRNDGSIYN. Residues 494-527 form a 2-gamma repeat; it reads DDMVMDVKRSDPSLKEIILHPYHGKPNQIWLTLF.

It in the N-terminal section; belongs to the ribosome-inactivating protein family. Type 2 RIP subfamily. Disulfide-linked dimer of A and B chains.

It catalyses the reaction Endohydrolysis of the N-glycosidic bond at one specific adenosine on the 28S rRNA.. Its function is as follows. The A chain is responsible for inhibiting protein synthesis through the catalytic inactivation of 60S ribosomal subunits by removing adenine from position 4,324 of 28S rRNA. Abrin-a is more toxic than ricin. In terms of biological role, the B chain is a galactose-specific lectin that facilitates the binding of abrin to the cell membrane that precedes endocytosis. This is Abrin-b from Abrus precatorius (Indian licorice).